The following is a 534-amino-acid chain: High affinity cGMP-specific 3',5'-cyclic phosphodiesterase 9A (534 aa).

Positions 175–496 (PRRDVPTYPK…EHYEELKQLD (322 aa)) constitute a PDEase domain. Catalysis depends on histidine 251, which acts as the Proton donor. Residue 251-255 (HNFRH) coordinates 3',5'-cyclic GMP. Histidine 255, histidine 291, and aspartate 292 together coordinate Zn(2+). Aspartate 292 serves as a coordination point for 3',5'-cyclic GMP. Aspartate 292 provides a ligand contact to Mg(2+). Serine 318 is modified (phosphoserine). Residues aspartate 401, tyrosine 423, and 451–452 (AQ) contribute to the 3',5'-cyclic GMP site. Aspartate 401 contributes to the Zn(2+) binding site. The tract at residues 500–534 (KELQKKTESLTSGAPENTTEKNRDAKDSEGHSPPN) is disordered. Basic and acidic residues predominate over residues 517 to 534 (TTEKNRDAKDSEGHSPPN).

The protein belongs to the cyclic nucleotide phosphodiesterase family. PDE9 subfamily. Homodimer. Requires Zn(2+) as cofactor. It depends on Mg(2+) as a cofactor. As to expression, highly expressed in kidney. Lower levels in liver, lung and brain. Widely expressed in brain, with highest expression in cerebellar Purkinje cells. Present in heart (at protein level).

It is found in the cell projection. The protein resides in the ruffle membrane. The protein localises to the cytoplasm. It localises to the perinuclear region. Its subcellular location is the golgi apparatus. It is found in the endoplasmic reticulum. The protein resides in the cell membrane. The protein localises to the sarcolemma. It carries out the reaction 3',5'-cyclic GMP + H2O = GMP + H(+). Its pathway is purine metabolism; 3',5'-cyclic GMP degradation; GMP from 3',5'-cyclic GMP: step 1/1. With respect to regulation, inhibited by SCH 51866 and moderately, by zaprinast. Specifically inhibited by PF-04447943 (6-[(3S,4S)-4-methyl-1-(pyrimidin-2-ylmethyl)pyrrolidin-3-yl]-1-(tetrahydro-2H-pyran-4-yl)-1,5-dihydro-4H-pyrazolo[3,4-d]pyrimidin-4-one). Functionally, specifically hydrolyzes the second messenger cGMP, which is a key regulator of many important physiological processes. Highly specific: compared to other members of the cyclic nucleotide phosphodiesterase family, has the highest affinity and selectivity for cGMP. Specifically regulates natriuretic-peptide-dependent cGMP signaling in heart, acting as a regulator of cardiac hypertrophy in myocytes and muscle. Does not regulate nitric oxide-dependent cGMP in heart. Additional experiments are required to confirm whether its ability to hydrolyze natriuretic-peptide-dependent cGMP is specific to heart or is a general feature of the protein. In brain, involved in cognitive function, such as learning and long-term memory. This chain is High affinity cGMP-specific 3',5'-cyclic phosphodiesterase 9A (Pde9a), found in Mus musculus (Mouse).